Reading from the N-terminus, the 215-residue chain is 3-isopropylmalate dehydratase small subunit (215 aa).

It belongs to the LeuD family. LeuD type 1 subfamily. Heterodimer of LeuC and LeuD.

The catalysed reaction is (2R,3S)-3-isopropylmalate = (2S)-2-isopropylmalate. It functions in the pathway amino-acid biosynthesis; L-leucine biosynthesis; L-leucine from 3-methyl-2-oxobutanoate: step 2/4. Catalyzes the isomerization between 2-isopropylmalate and 3-isopropylmalate, via the formation of 2-isopropylmaleate. The chain is 3-isopropylmalate dehydratase small subunit from Acinetobacter baumannii (strain AB307-0294).